The chain runs to 516 residues: Maturase K (516 aa).

It belongs to the intron maturase 2 family. MatK subfamily.

Its subcellular location is the plastid. It localises to the chloroplast. Usually encoded in the trnK tRNA gene intron. Probably assists in splicing its own and other chloroplast group II introns. This chain is Maturase K, found in Chara connivens (Convergent stonewort).